We begin with the raw amino-acid sequence, 219 residues long: Probable N-acetyltransferase camello (219 aa).

2 helical membrane-spanning segments follow: residues 42–62 and 64–84; these read FYFI…SYVL and LTSL…EFHG. Residues 62 to 218 enclose the N-acetyltransferase domain; it reads LSLTSLVALL…TVIYYRYDIK (157 aa).

The protein belongs to the camello family. As to expression, at the beginning of gastrulation, expressed in deep cells of the presumptive mesoderm. At later gastrulation stages, expressed at the interface between already involuted and preinvoluted mesoderm. At late neurula and tailbud stages, expressed in the deep mass of cells lying ventrally and laterally to the closed blastopore.

The protein resides in the golgi apparatus membrane. Plays a role in regulation of gastrulation, possibly by controlled reduction of cell adhesion which is necessary for optimal cell motility. The protein is Probable N-acetyltransferase camello of Xenopus laevis (African clawed frog).